A 321-amino-acid polypeptide reads, in one-letter code: Phospho-N-acetylmuramoyl-pentapeptide-transferase (321 aa).

A run of 10 helical transmembrane segments spans residues 6–26 (ALIPIVSSCAMTIAAMPLFIG), 50–70 (GTPTMGGLVFLVAAILTGIWV), 82–102 (LFILLFVLALYGVIGFLDDFI), 118–138 (LLGQIIGGIIFYLVYRSEGYP), 143–163 (FFGIELPLGLFYGVFAIFWLV), 175–195 (IDGLVAGLGTISFATYGIIAW), 200–220 (YDVLVICLSVLGGLLGFFAYN), 226–246 (IFMGDVGSLALGGLLAAISIM), 251–271 (WTLLLVGLIYVMETASVMLQV), and 301–321 (IDIIFWLVSIVTSLITLWFIW).

It belongs to the glycosyltransferase 4 family. MraY subfamily. Mg(2+) serves as cofactor.

It localises to the cell membrane. It carries out the reaction UDP-N-acetyl-alpha-D-muramoyl-L-alanyl-gamma-D-glutamyl-L-lysyl-D-alanyl-D-alanine + di-trans,octa-cis-undecaprenyl phosphate = Mur2Ac(oyl-L-Ala-gamma-D-Glu-L-Lys-D-Ala-D-Ala)-di-trans,octa-cis-undecaprenyl diphosphate + UMP. It functions in the pathway cell wall biogenesis; peptidoglycan biosynthesis. Its function is as follows. Catalyzes the initial step of the lipid cycle reactions in the biosynthesis of the cell wall peptidoglycan: transfers peptidoglycan precursor phospho-MurNAc-pentapeptide from UDP-MurNAc-pentapeptide onto the lipid carrier undecaprenyl phosphate, yielding undecaprenyl-pyrophosphoryl-MurNAc-pentapeptide, known as lipid I. The polypeptide is Phospho-N-acetylmuramoyl-pentapeptide-transferase (Enterococcus hirae).